We begin with the raw amino-acid sequence, 157 residues long: MKLSHLDEKNHPKMVDVGDKNITSRIATASGMIYMSQEAFDVIKNNTAKKGPVLQTAIIAAIMGAKKTSEIIPMCHPLMLSKVETDIMEFVKECAFKLIVTVKCEGKTGVEMEALSGVSIGLLTIYDMIKAIDKSMRITDIVLESKEGGKSGKFVRS.

Residues 74-76 (MCH) and 112-113 (ME) each bind substrate. The active site involves Asp127.

It belongs to the MoaC family. As to quaternary structure, homohexamer; trimer of dimers.

The enzyme catalyses (8S)-3',8-cyclo-7,8-dihydroguanosine 5'-triphosphate = cyclic pyranopterin phosphate + diphosphate. Its pathway is cofactor biosynthesis; molybdopterin biosynthesis. Catalyzes the conversion of (8S)-3',8-cyclo-7,8-dihydroguanosine 5'-triphosphate to cyclic pyranopterin monophosphate (cPMP). In Campylobacter jejuni subsp. jejuni serotype O:23/36 (strain 81-176), this protein is Cyclic pyranopterin monophosphate synthase.